Consider the following 563-residue polypeptide: Cytidine monophosphate-N-acetylneuraminic acid hydroxylase (563 aa).

Residues 10-108 (LSPAETANLK…VEMDGNDGLF (99 aa)) form the Rieske domain. The [2Fe-2S] cluster site is built by cysteine 50, histidine 52, cysteine 71, and histidine 74.

This sequence belongs to the CMP-Neu5Ac hydroxylase family. [2Fe-2S] cluster is required as a cofactor.

Its subcellular location is the cytoplasm. It carries out the reaction CMP-N-acetyl-beta-neuraminate + 2 Fe(II)-[cytochrome b5] + O2 + 2 H(+) = CMP-N-glycoloyl-beta-neuraminate + 2 Fe(III)-[cytochrome b5] + H2O. Its pathway is amino-sugar metabolism; N-acetylneuraminate metabolism. Functionally, sialic acids are components of carbohydrate chains of glycoconjugates and are involved in cell-cell recognition and cell-pathogen interactions. Catalyzes the conversion of CMP-N-acetylneuraminic acid (CMP-Neu5Ac) into its hydroxylated derivative CMP-N-glycolylneuraminic acid (CMP-Neu5Gc), a sialic acid abundantly expressed at the surface of many cells. The sequence is that of Cytidine monophosphate-N-acetylneuraminic acid hydroxylase (CMAH) from Cricetulus griseus (Chinese hamster).